An 873-amino-acid chain; its full sequence is Bifunctional levopimaradiene synthase, chloroplastic (873 aa).

Residues 1 to 59 (MAGVLFANLPCSLQLSPKVPFRQSTNILIPFHKRSSFGFNAQHCVRSHLRLRWNCVGIH) constitute a chloroplast transit peptide. Substrate is bound at residue K271. Residues D405 and D407 each contribute to the Mg(2+) site. Positions 405–408 (DVDD) match the DXDD motif motif. Substrate is bound at residue K492. 5 residues coordinate Mg(2+): D624, D628, N769, T773, and E777. The short motif at 624–628 (DDLYD) is the DDXXD motif element.

Belongs to the terpene synthase family. Tpsd subfamily. Mg(2+) serves as cofactor. In terms of tissue distribution, expressed in roots.

It localises to the plastid. Its subcellular location is the chloroplast. It carries out the reaction (2E,6E,10E)-geranylgeranyl diphosphate = (+)-copalyl diphosphate. The catalysed reaction is (+)-copalyl diphosphate = abieta-8(14),12-diene + diphosphate. It participates in terpene metabolism; ginkgolide biosynthesis. Catalyzes the initial cyclization step in the biosynthesis of ginkgolides, a structurally unique family of diterpenoids that are highly specific platelet-activating-factor receptor antagonists. Bifunctional enzyme that catalyzes two sequential cyclizations of geranylgeranyl diphosphate (GGPP) to levopimaradiene. The chain is Bifunctional levopimaradiene synthase, chloroplastic (LPS) from Ginkgo biloba (Ginkgo).